Here is a 230-residue protein sequence, read N- to C-terminus: DNA ADP-ribosyl transferase (230 aa).

A DarT domain is found at 26–230 (WIVWHFTHAD…KYVIKPGMYY (205 aa)). NAD(+) is bound by residues 30-32 (HFT), glycine 39, leucine 47, and arginine 67. Catalysis depends on arginine 67, which acts as the Proton acceptor. Glutamate 183 is an active-site residue.

It belongs to the DarT ADP-ribosyltransferase family. Interacts with cognate antitoxin DarG (via C-terminus); this heterodimeric complex neutralizes the toxic effect of DarT by preventing ssDNA binding to DarT and consequently inactivating the toxin by direct protein-protein interactions.

The enzyme catalyses a thymidine in DNA + NAD(+) = an N-(ADP-alpha-D-ribosyl)-thymidine in DNA + nicotinamide + H(+). In terms of biological role, toxic component of the hybrid type II/IV toxin-antitoxin (TA) system DarTG, which plays a crucial role in controlling bacterial growth and bacteriophage infection. ADP-ribosylates ssDNA, preferentially in the motif TTTW. In case of phage infection, DarT toxin ADP-ribosylates DNA, which inhibits both viral DNA and RNA synthesis and leads to abortive infection. Its toxic effect is neutralized by cognate antitoxin DarG. The chain is DNA ADP-ribosyl transferase from Mycobacterium bovis (strain BCG / Pasteur 1173P2).